The primary structure comprises 1703 residues: Homeobox protein prospero (1703 aa).

Disordered stretches follow at residues 23-292 (LKAN…SNGG), 322-357 (SVSTANSSSSNNNNSSTPAALATHSPTSNSPVSGAS), 437-521 (NSIA…QSQL), 608-692 (EPQT…ESVD), 732-751 (EDDDDDCVEQKTSGSGCLKK), 823-844 (QEDSESNELESPQIQQKRVEKN), 875-951 (SECQ…DSGA), 1040-1101 (FEQE…RMGG), 1197-1217 (SPRTKVADRPQNGPTPATQSA), 1245-1389 (PFCL…VSLP), and 1418-1469 (AGQA…PSML). Residues 36-53 (QQHQPQFQQQQQQQQQQQ) show a composition bias toward low complexity. Polar residues predominate over residues 66–79 (SNGHTSPIPSQVNG). Positions 92–109 (TNTNTGSHSHSNSGNTNT) are enriched in low complexity. Over residues 110–126 (DADKEQEREKAKEKANE) the composition is skewed to basic and acidic residues. Positions 127-136 (EESEDSDDDV) are enriched in acidic residues. 5 stretches are compositionally biased toward low complexity: residues 137–188 (VVVL…GGSS), 196–255 (SSRQ…ANSK), 274–292 (ASSNSNSNSSNNSSNSNGG), 327–337 (NSSSSNNNNSS), and 346–357 (SPTSNSPVSGAS). Over residues 437–452 (NSIAPANSTPMSNGTN) the composition is skewed to polar residues. The span at 453–472 (ASISPGSAHSSSHSHQGVSP) shows a compositional bias: low complexity. 4 positions are modified to phosphoserine: serine 479, serine 482, serine 485, and serine 497. Polar residues-rich tracts occupy residues 503–521 (SVSSLNGGASSGEQHQSQL) and 608–617 (EPQTAPQPQQ). Positions 618–642 (SPHGSSHSSRSGSGSGSHSSMASDG) are enriched in low complexity. Basic and acidic residues-rich tracts occupy residues 643-658 (SLRRKSSDSLDSHGAQ) and 674-691 (SESRAPEEPQLPTKKESV). 2 positions are modified to phosphoserine: serine 651 and serine 654. Residues 875–892 (SECQELDQDQDVEQEQEP) show a composition bias toward acidic residues. Positions 927–944 (PGSSSPSPSPLKPKTSLG) are enriched in low complexity. The span at 1040-1054 (FEQEQQEQQRRKEEQ) shows a compositional bias: basic and acidic residues. A compositionally biased stretch (low complexity) spans 1055-1076 (QQQIQRQQQHLQQLQQQQMEQQ). Over residues 1208–1217 (NGPTPATQSA) the composition is skewed to polar residues. The span at 1252–1278 (QQQQQQTAQQQQSAQQQQQSSQQTQQQ) shows a compositional bias: low complexity. The short motif at 1291-1298 (PKKKRHKV) is the Nuclear localization signal element. Low complexity predominate over residues 1328 to 1348 (PQQQQQQQQQQQQQQQQQQQQ). Residues 1349–1367 (ASNGGNSNATPAQSPTRSS) are compositionally biased toward polar residues. Over residues 1374-1384 (PQPPPPPPPMM) the composition is skewed to pro residues. Basic residues predominate over residues 1427–1437 (HQHHQQHHPHH). A compositionally biased stretch (low complexity) spans 1438 to 1451 (QSMQLSSSPPGSLG). Positions 1545-1603 (SSTLTPMHLRKAKLMFFWVRYPSSAVLKMYFPDIKFNKNNTAQLVKWFSNFREFYYIQM) constitute a Prospero-type homeo domain. The homeo-Prospero stretch occupies residues 1545–1703 (SSTLTPMHLR…KSPNFLEQLE (159 aa)). The region spanning 1604 to 1703 (EKYARQAVTE…KSPNFLEQLE (100 aa)) is the Prospero domain.

This sequence belongs to the Prospero homeodomain family.

It is found in the nucleus. Its subcellular location is the cytoplasm. It localises to the cell cortex. Its function is as follows. Homeodomain protein that controls neuronal identity. As a transcriptional factor, regulates the expression of ftz, eve and en in a subset of neuroblast progeny and modulates the transcriptional activity of other homeodomain proteins such as Dfd. Required for proper neuronal differentiation, axonal outgrowth and pathfinding of most or all neurons and their precursors in central and peripheral nervous systems. Regulates asymmetric stem cell self-renewal together with brat. The polypeptide is Homeobox protein prospero (pros) (Drosophila melanogaster (Fruit fly)).